The sequence spans 183 residues: Ribosome rescue factor SmrB (183 aa).

Positions 98 to 173 (LDLHGLTQLQ…GDAALLVLIE (76 aa)) constitute a Smr domain.

The protein belongs to the SmrB family. As to quaternary structure, associates with collided ribosomes, but not with correctly translating polysomes.

Its function is as follows. Acts as a ribosome collision sensor. Detects stalled/collided disomes (pairs of ribosomes where the leading ribosome is stalled and a second ribosome has collided with it) and endonucleolytically cleaves mRNA at the 5' boundary of the stalled ribosome. Stalled/collided disomes form a new interface (primarily via the 30S subunits) that binds SmrB. Cleaved mRNA becomes available for tmRNA ligation, leading to ribosomal subunit dissociation and rescue of stalled ribosomes. The polypeptide is Ribosome rescue factor SmrB (Shigella dysenteriae serotype 1 (strain Sd197)).